Here is a 354-residue protein sequence, read N- to C-terminus: MRHSLTKLLAASGSNSPTRSESPEPAATCSLPSDLTRAAAGEEETAAAGSPGRKQQFGDEGELEAGRGSRGGVAVRAPSPEEMEEEAIASLPGEETEDMDFLSGLELADLLDPRQPDWHLDPGLSSPGPLSSSGGGSDSGGLWRGDDDDEAAAAEMQRFSDLLQRLLNGIGGCSSSSDSGSAEKRRRKSPGGGGGGGSGNDNNQAATKSPRKAAAAAARLNRLKKKEYVMGLESRVRGLAAENQELRAENRELGKRVQALQEESRYLRAVLANETGLARLLSRLSGVGLRLTTSLFRDSPAGDHDYALPVGKQKQDLLEEDDSAGGVCLHVDKDKVSVEFCSACARKASSSLKM.

Disordered stretches follow at residues 1-95, 113-156, and 171-214; these read MRHS…PGEE, PRQP…AAEM, and GGCS…RKAA. At S50 the chain carries Phosphoserine. The span at 121–132 shows a compositional bias: low complexity; the sequence is DPGLSSPGPLSS. Composition is skewed to gly residues over residues 133-143 and 190-199; these read SGGGSDSGGLW and PGGGGGGGSG. In terms of domain architecture, bZIP spans 204–267; that stretch reads QAATKSPRKA…QALQEESRYL (64 aa). Positions 205-214 are enriched in low complexity; sequence AATKSPRKAA. Residues 219-226 form a basic motif region; the sequence is RLNRLKKK. Residues 232-267 form a leucine-zipper region; it reads LESRVRGLAAENQELRAENRELGKRVQALQEESRYL. The HCFC1-binding motif (HBM) signature appears at 303–306; it reads DHDY.

Belongs to the bZIP family. ATF subfamily. As to quaternary structure, interacts with HCFC1; the interaction inhibits CREB3 transcriptional activity. Interacts with CREB3; the interaction occurs only in combination with HCFC1. As to expression, in adults, expressed most abundantly in heart, liver and skeletal muscle, moderately abundant in kidney and pancreas, and barely detectable in lung. In fetal tissues, expressed most abundantly in kidney and very low amounts in heart, lung and liver.

It localises to the nucleus. Its function is as follows. Strongly activates transcription when bound to HCFC1. Suppresses the expression of HSV proteins in cells infected with the virus in a HCFC1-dependent manner. Also suppresses the HCFC1-dependent transcriptional activation by CREB3 and reduces the amount of CREB3 in the cell. Able to down-regulate expression of some cellular genes in CREBZF-expressing cells. The protein is CREB/ATF bZIP transcription factor (CREBZF) of Homo sapiens (Human).